We begin with the raw amino-acid sequence, 397 residues long: MTTNTVTRKVAWLRVVTLAIAAFIFNTTEFVPVGLLSDIAASFHMETAQTGIMLTIYAWVVALMSLPFMLLTSQVERRRLLICLFVLFIASHILSFMAWSFTVLVISRIGVAFAHAIFWSITASLAIRLAPAGKRAQALSLLATGTALAMVLGLPVGRIVGQYFGWRTTFLAIGVGAFLTLLCLIKLLPLLPSEHSGSLKSLPVLFRRPALMSIYLLTVVVVTAHYTAYSYIEPFVQNIAGLSANFATVLLLILGGAGIIGSVIFGKLGNNHASVLVSVAIALLMACLLLLMPASVSETHLAILSIFWGIAIMMIGLGMQVKVLALAPDATDVAMSLFSGIFNIGIGAGALVGNQVSLHWSMADIGYVGAIPAFLALVWSVIIFRRWPVVLEEQPQH.

Transmembrane regions (helical) follow at residues 15 to 35, 51 to 71, 81 to 101, 103 to 123, 136 to 156, 170 to 190, 209 to 229, 246 to 266, 273 to 293, 301 to 321, 333 to 353, and 364 to 384; these read VVTLAIAAFIFNTTEFVPVGL, GIMLTIYAWVVALMSLPFMLL, LICLFVLFIASHILSFMAWSF, VLVISRIGVAFAHAIFWSITA, AQALSLLATGTALAMVLGLPV, FLAIGVGAFLTLLCLIKLLPL, PALMSIYLLTVVVVTAHYTAY, FATVLLLILGGAGIIGSVIFG, ASVLVSVAIALLMACLLLLMP, LAILSIFWGIAIMMIGLGMQV, VAMSLFSGIFNIGIGAGALVG, and DIGYVGAIPAFLALVWSVIIF.

The protein belongs to the major facilitator superfamily. SotB (TC 2.A.1.2) family.

The protein resides in the cell inner membrane. Involved in the efflux of sugars. The physiological role may be the reduction of the intracellular concentration of toxic sugars or sugar metabolites. This is Probable sugar efflux transporter from Escherichia fergusonii (strain ATCC 35469 / DSM 13698 / CCUG 18766 / IAM 14443 / JCM 21226 / LMG 7866 / NBRC 102419 / NCTC 12128 / CDC 0568-73).